A 255-amino-acid chain; its full sequence is Enolase-phosphatase E1 (255 aa).

Asp-22 and Glu-24 together coordinate Mg(2+). Residues Ser-136–Ser-137 and Lys-173 each bind substrate. Position 199 (Asp-199) interacts with Mg(2+).

Belongs to the HAD-like hydrolase superfamily. MasA/MtnC family. In terms of assembly, monomer. Mg(2+) is required as a cofactor.

The protein localises to the cytoplasm. It is found in the nucleus. It carries out the reaction 5-methylsulfanyl-2,3-dioxopentyl phosphate + H2O = 1,2-dihydroxy-5-(methylsulfanyl)pent-1-en-3-one + phosphate. Its pathway is amino-acid biosynthesis; L-methionine biosynthesis via salvage pathway; L-methionine from S-methyl-5-thio-alpha-D-ribose 1-phosphate: step 3/6. It functions in the pathway amino-acid biosynthesis; L-methionine biosynthesis via salvage pathway; L-methionine from S-methyl-5-thio-alpha-D-ribose 1-phosphate: step 4/6. Functionally, bifunctional enzyme that catalyzes the enolization of 2,3-diketo-5-methylthiopentyl-1-phosphate (DK-MTP-1-P) into the intermediate 2-hydroxy-3-keto-5-methylthiopentenyl-1-phosphate (HK-MTPenyl-1-P), which is then dephosphorylated to form the acireductone 1,2-dihydroxy-3-keto-5-methylthiopentene (DHK-MTPene). This is Enolase-phosphatase E1 from Verticillium alfalfae (strain VaMs.102 / ATCC MYA-4576 / FGSC 10136) (Verticillium wilt of alfalfa).